Here is a 336-residue protein sequence, read N- to C-terminus: Inactive serine/threonine-protein kinase PLK5 (336 aa).

The 65-residue stretch at Met1–Phe65 folds into the Protein kinase; truncated domain. 2 disordered regions span residues Pro109–Glu135 and Gly224–Pro245. A POLO box domain is found at Leu255–Ile336.

It belongs to the protein kinase superfamily. Ser/Thr protein kinase family. CDC5/Polo subfamily. As to expression, expressed in the brain, neurons and glial cells. Also expressed in highly differentiated cells, such as the serous acini in the parotid gland, distal and proximal tubules of the kidney, tubules of the seminal gland, Kupffer cells and some hepatocytes in the liver, and some cells in the germinal center of lymph nodes (at protein level).

The protein resides in the nucleus. Its subcellular location is the nucleolus. It localises to the cytoplasm. Inactive serine/threonine-protein kinase that plays a role in cell cycle progression and neuronal differentiation. This Homo sapiens (Human) protein is Inactive serine/threonine-protein kinase PLK5 (PLK5).